The chain runs to 326 residues: N-acetyl-gamma-glutamyl-phosphate reductase (326 aa).

Cys155 is a catalytic residue.

The protein belongs to the NAGSA dehydrogenase family. Type 1 subfamily.

The protein resides in the cytoplasm. The catalysed reaction is N-acetyl-L-glutamate 5-semialdehyde + phosphate + NADP(+) = N-acetyl-L-glutamyl 5-phosphate + NADPH + H(+). Its pathway is amino-acid biosynthesis; L-arginine biosynthesis; N(2)-acetyl-L-ornithine from L-glutamate: step 3/4. Functionally, catalyzes the NADPH-dependent reduction of N-acetyl-5-glutamyl phosphate to yield N-acetyl-L-glutamate 5-semialdehyde. In Shewanella sediminis (strain HAW-EB3), this protein is N-acetyl-gamma-glutamyl-phosphate reductase.